A 243-amino-acid chain; its full sequence is 3-deoxy-manno-octulosonate cytidylyltransferase (243 aa).

Belongs to the KdsB family.

Its subcellular location is the cytoplasm. The catalysed reaction is 3-deoxy-alpha-D-manno-oct-2-ulosonate + CTP = CMP-3-deoxy-beta-D-manno-octulosonate + diphosphate. It participates in nucleotide-sugar biosynthesis; CMP-3-deoxy-D-manno-octulosonate biosynthesis; CMP-3-deoxy-D-manno-octulosonate from 3-deoxy-D-manno-octulosonate and CTP: step 1/1. Its pathway is bacterial outer membrane biogenesis; lipopolysaccharide biosynthesis. In terms of biological role, activates KDO (a required 8-carbon sugar) for incorporation into bacterial lipopolysaccharide in Gram-negative bacteria. This chain is 3-deoxy-manno-octulosonate cytidylyltransferase, found in Helicobacter pylori (strain J99 / ATCC 700824) (Campylobacter pylori J99).